Reading from the N-terminus, the 270-residue chain is 4-hydroxy-tetrahydrodipicolinate reductase (270 aa).

NAD(+)-binding positions include Gly-9–Met-14 and Glu-35. Arg-36 serves as a coordination point for NADP(+). Residues Gly-99–Thr-101 and Ala-123–Tyr-126 each bind NAD(+). Residue His-156 is the Proton donor/acceptor of the active site. His-157 contacts (S)-2,3,4,5-tetrahydrodipicolinate. Lys-160 acts as the Proton donor in catalysis. Gly-166 to Thr-167 contributes to the (S)-2,3,4,5-tetrahydrodipicolinate binding site.

It belongs to the DapB family.

It localises to the cytoplasm. It catalyses the reaction (S)-2,3,4,5-tetrahydrodipicolinate + NAD(+) + H2O = (2S,4S)-4-hydroxy-2,3,4,5-tetrahydrodipicolinate + NADH + H(+). The catalysed reaction is (S)-2,3,4,5-tetrahydrodipicolinate + NADP(+) + H2O = (2S,4S)-4-hydroxy-2,3,4,5-tetrahydrodipicolinate + NADPH + H(+). Its pathway is amino-acid biosynthesis; L-lysine biosynthesis via DAP pathway; (S)-tetrahydrodipicolinate from L-aspartate: step 4/4. Its function is as follows. Catalyzes the conversion of 4-hydroxy-tetrahydrodipicolinate (HTPA) to tetrahydrodipicolinate. This Histophilus somni (strain 2336) (Haemophilus somnus) protein is 4-hydroxy-tetrahydrodipicolinate reductase.